Reading from the N-terminus, the 179-residue chain is Probable DNA-directed RNA polymerase subunit delta (179 aa).

The region spanning 14 to 81 is the HTH HARE-type domain; that stretch reads MSLVELAYEI…GDQRWGLRSW (68 aa). A disordered region spans residues 108-179; it reads VVEEDFDEIE…DDLDDNEEEK (72 aa). The segment covering 109-179 has biased composition (acidic residues); that stretch reads VEEDFDEIEE…DDLDDNEEEK (71 aa).

This sequence belongs to the RpoE family. In terms of assembly, RNAP is composed of a core of 2 alpha, a beta and a beta' subunits. The core is associated with a delta subunit and one of several sigma factors.

Participates in both the initiation and recycling phases of transcription. In the presence of the delta subunit, RNAP displays an increased specificity of transcription, a decreased affinity for nucleic acids, and an increased efficiency of RNA synthesis because of enhanced recycling. This chain is Probable DNA-directed RNA polymerase subunit delta, found in Bacillus pumilus (strain SAFR-032).